A 41-amino-acid polypeptide reads, in one-letter code: Ranatuerin-2PLg (41 aa).

The propeptide occupies 1-11 (DDGVEMTEEEV). A disulfide bond links Cys-36 and Cys-41.

It belongs to the frog skin active peptide (FSAP) family. Ranatuerin subfamily.

The protein resides in the secreted. Its function is as follows. Antimicrobial peptide. This is Ranatuerin-2PLg from Lithobates palustris (Pickerel frog).